The sequence spans 650 residues: Probable protein phosphatase 2C 36 (650 aa).

The segment at 146–166 (SGKKTKEKAKLKKSGSKSFTK) is disordered. Residues 148 to 166 (KKTKEKAKLKKSGSKSFTK) are compositionally biased toward basic residues. The PPM-type phosphatase domain maps to 239–641 (ESALEEPKIQ…DDVSVIVISL (403 aa)). Residues Asp276, Gly277, Asp569, and Asp632 each contribute to the Mn(2+) site.

This sequence belongs to the PP2C family. The cofactor is Mg(2+). Mn(2+) serves as cofactor.

It localises to the nucleus. The enzyme catalyses O-phospho-L-seryl-[protein] + H2O = L-seryl-[protein] + phosphate. It carries out the reaction O-phospho-L-threonyl-[protein] + H2O = L-threonyl-[protein] + phosphate. This chain is Probable protein phosphatase 2C 36 (PLL3), found in Arabidopsis thaliana (Mouse-ear cress).